Consider the following 121-residue polypeptide: Ribosome-binding factor A (121 aa).

This sequence belongs to the RbfA family. In terms of assembly, monomer. Binds 30S ribosomal subunits, but not 50S ribosomal subunits or 70S ribosomes.

The protein resides in the cytoplasm. In terms of biological role, one of several proteins that assist in the late maturation steps of the functional core of the 30S ribosomal subunit. Associates with free 30S ribosomal subunits (but not with 30S subunits that are part of 70S ribosomes or polysomes). Required for efficient processing of 16S rRNA. May interact with the 5'-terminal helix region of 16S rRNA. The chain is Ribosome-binding factor A from Lactobacillus acidophilus (strain ATCC 700396 / NCK56 / N2 / NCFM).